The sequence spans 436 residues: Trigger factor (436 aa).

The 86-residue stretch at Gly163–Pro248 folds into the PPIase FKBP-type domain.

It belongs to the FKBP-type PPIase family. Tig subfamily.

It is found in the cytoplasm. It carries out the reaction [protein]-peptidylproline (omega=180) = [protein]-peptidylproline (omega=0). Functionally, involved in protein export. Acts as a chaperone by maintaining the newly synthesized protein in an open conformation. Functions as a peptidyl-prolyl cis-trans isomerase. This is Trigger factor from Polaromonas naphthalenivorans (strain CJ2).